The chain runs to 133 residues: Nickel-responsive regulator (133 aa).

Ni(2+) is bound by residues histidine 76, histidine 87, histidine 89, and cysteine 95.

Belongs to the transcriptional regulatory CopG/NikR family. In terms of assembly, homotetramer. Requires Ni(2+) as cofactor.

Its function is as follows. Transcriptional repressor of the nikABCDE operon. Is active in the presence of excessive concentrations of intracellular nickel. In Escherichia coli (strain SMS-3-5 / SECEC), this protein is Nickel-responsive regulator.